Reading from the N-terminus, the 123-residue chain is uncharacterized protein (123 aa).

Phosphothreonine is present on Thr56. Phosphoserine is present on residues Ser73, Ser87, Ser97, Ser113, and Ser119.

In terms of tissue distribution, highly expressed in the kidney (at protein level).

It localises to the cytoplasm. This is an uncharacterized protein from Felis catus (Cat).